Consider the following 416-residue polypeptide: Secreted RxLR effector protein 25 (416 aa).

A signal peptide spans 1–20 (MRSWLLLLVGLSSYFALSTS). The short motif at 49–88 (RKLRAPGGDTNTLKDSGKARREKKVWKLFCRVFLQLDDEK) is the RxLR-dEER element.

It belongs to the RxLR effector family.

It localises to the secreted. Its subcellular location is the host cytoplasm. The protein localises to the host nucleus. Functionally, effector that partially suppresses the tobacco programmed cell death induced by cell death-inducing proteins. The sequence is that of Secreted RxLR effector protein 25 from Plasmopara viticola (Downy mildew of grapevine).